Consider the following 1409-residue polypeptide: MKDLLKFLKQQSKTEEFNGIKIGLASPDLIRSWSFGEVKKPETINYRTFKPEREGLFCARIFGPVKDYECLCGKYKRLKHRGVICEKCGVEVTQTKVRRERMGHIDLASPVAHIWFLKSLPSRIGLMLDMTLRDIERVLYFESFVVIEPGMTSLERGQMLTEESYLDALEEYGDEFEAKMGAEAVLELLRAIELEKEIESLREELPSINSETRRKKMTKRLKLIEAFFHSGNKPEWMILKVLPVLPPDLRPLVPLDGGRFATSDLNDLYRRVINRNNRLKRLLDLAAPDIIVRNEKRMLQESVDALLDNGRRGRAITGSNKRPLKSLADMIKGKQGRFRQNLLGKRVDYSGRSVITVGPTLRLHQCGLPKKMALELFKPFIYGKLEGRGLATTIKAAKKMVEREVPEVWDVLDDVIREHPVMLNRAPTLHRLGIQAFEPVLIEGKAIQLHPLVCAAYNADFDGDQMAVHVPLTLEAQLEARSLMMSTNNILSPANGEPVITPSQDVVLGLYYASRKCVNGKGEGMVFESIDEVEKAYRTGFAAIHAQVKVRITETHIAENGERTEARRIVDTTVGRSLLSRVLPKGLSFDLVNQNMGKKQIGKLLNTCYRQLGLKDTVVFADQLMYAGFHYATVSGASVGIDDMVIPAAKYTLVADAEAEVLEIQEQFQSGLVTAGERYNKVIDIWASANEKISKAMMDNLSVETVINRDGEEEEQESFNSIYMMADSGARGSAAQIRQLAGMRGLMAKPDGSIIETPIVANFREGLNVSQYFISTHGARKGLADTALKTANSGYLTRRLVDVAQDLVVIEDDCGTFEGLTMKPLIEGGDVVEPLRERVLGRVVALDVFYPGTEKVLAPRNTLLDEAWCDTLEDNSIDEVIVRSVISCNTDFGVCKACYGRDLARGHIINQGEAIGVVAAQSIGEPGTQLNGWRTFHIGGAASRASAENNVQVKNAGTVKLHNAKHVTNSEGKLVIVSRSSEVAIIDELGREKERYKVPYGTILEKLEESIVTAGEIIANWDPHTHPIISEVAGTIKFVDMIEGVTMTRQTDDLTGLSSIVVMEVGQRPTAGKEMRPSIRLLDASGEDLKIPGTEVPAQYFLPGKAIVNQDDNAEINVGDALARIPQESSKTRDITGGLPRVADLFEARKPKEPAILAEYSGTISFGKETKGKRRLLITPADGGKPYEEMIPKWRNLNVFEGEKVERGEVIADGAEAAHDILRLRGIHKVANYIVNEVQDVYRLQGVKINDKHIEVIIRQMLRKCLITDAGDSQFLAGEQAEVARVKIANRELEAQGKKPATFDRELLGITKASLATESFISAASFQETTRVLTEAAVGGKSDKLRGLKENVIVGRLIPAGTGYAYHQKRNAALAAKASGKTSEQATTITASEAERNLADLLNLAGSSD.

Cys70, Cys72, Cys85, and Cys88 together coordinate Zn(2+). Mg(2+)-binding residues include Asp460, Asp462, and Asp464. Zn(2+) contacts are provided by Cys814, Cys888, Cys895, and Cys898.

This sequence belongs to the RNA polymerase beta' chain family. In terms of assembly, the RNAP catalytic core consists of 2 alpha, 1 beta, 1 beta' and 1 omega subunit. When a sigma factor is associated with the core the holoenzyme is formed, which can initiate transcription. Mg(2+) serves as cofactor. The cofactor is Zn(2+).

It catalyses the reaction RNA(n) + a ribonucleoside 5'-triphosphate = RNA(n+1) + diphosphate. In terms of biological role, DNA-dependent RNA polymerase catalyzes the transcription of DNA into RNA using the four ribonucleoside triphosphates as substrates. The protein is DNA-directed RNA polymerase subunit beta' of Shewanella violacea.